The primary structure comprises 130 residues: Small ribosomal subunit protein uS9 (130 aa).

It belongs to the universal ribosomal protein uS9 family.

The sequence is that of Small ribosomal subunit protein uS9 from Serratia proteamaculans (strain 568).